The chain runs to 286 residues: ATP synthase gamma chain (286 aa).

This sequence belongs to the ATPase gamma chain family. In terms of assembly, F-type ATPases have 2 components, CF(1) - the catalytic core - and CF(0) - the membrane proton channel. CF(1) has five subunits: alpha(3), beta(3), gamma(1), delta(1), epsilon(1). CF(0) has three main subunits: a, b and c.

The protein localises to the cell inner membrane. Functionally, produces ATP from ADP in the presence of a proton gradient across the membrane. The gamma chain is believed to be important in regulating ATPase activity and the flow of protons through the CF(0) complex. This chain is ATP synthase gamma chain, found in Shewanella woodyi (strain ATCC 51908 / MS32).